A 482-amino-acid chain; its full sequence is tRNA sulfurtransferase (482 aa).

In terms of domain architecture, THUMP spans 61 to 165; the sequence is EQAIEALACI…GEELFIVSAI (105 aa). ATP-binding positions include 183–184, K265, G287, and Q296; that span reads LI. A disulfide bridge connects residues C344 and C456. The Rhodanese domain maps to 404–482; that stretch reads SGDNEVILDI…GFANVKVYRP (79 aa). The active-site Cysteine persulfide intermediate is the C456.

This sequence belongs to the ThiI family.

It is found in the cytoplasm. It catalyses the reaction [ThiI sulfur-carrier protein]-S-sulfanyl-L-cysteine + a uridine in tRNA + 2 reduced [2Fe-2S]-[ferredoxin] + ATP + H(+) = [ThiI sulfur-carrier protein]-L-cysteine + a 4-thiouridine in tRNA + 2 oxidized [2Fe-2S]-[ferredoxin] + AMP + diphosphate. The enzyme catalyses [ThiS sulfur-carrier protein]-C-terminal Gly-Gly-AMP + S-sulfanyl-L-cysteinyl-[cysteine desulfurase] + AH2 = [ThiS sulfur-carrier protein]-C-terminal-Gly-aminoethanethioate + L-cysteinyl-[cysteine desulfurase] + A + AMP + 2 H(+). It functions in the pathway cofactor biosynthesis; thiamine diphosphate biosynthesis. In terms of biological role, catalyzes the ATP-dependent transfer of a sulfur to tRNA to produce 4-thiouridine in position 8 of tRNAs, which functions as a near-UV photosensor. Also catalyzes the transfer of sulfur to the sulfur carrier protein ThiS, forming ThiS-thiocarboxylate. This is a step in the synthesis of thiazole, in the thiamine biosynthesis pathway. The sulfur is donated as persulfide by IscS. This chain is tRNA sulfurtransferase, found in Aeromonas hydrophila subsp. hydrophila (strain ATCC 7966 / DSM 30187 / BCRC 13018 / CCUG 14551 / JCM 1027 / KCTC 2358 / NCIMB 9240 / NCTC 8049).